Here is a 764-residue protein sequence, read N- to C-terminus: Tyrosine-protein phosphatase corkscrew (764 aa).

Residues 1–95 enclose the SH2 domain; the sequence is WFHGNLSGKE…GTVVHLRQPF (95 aa). The Tyrosine-protein phosphatase domain occupies 117–522; that stretch reads FWEEFESLQQ…KFVYYAVQHY (406 aa). The interval 174 to 325 is PTPase insert (Cys/Ser-rich); it reads IRLPTDGDLY…LNGEGNQFKT (152 aa). A disordered region spans residues 246–273; sequence SKHKRSESMSASANASAAGTGPGTPTAA. Over residues 255-273 the composition is skewed to low complexity; the sequence is SASANASAAGTGPGTPTAA. Substrate-binding positions include Asp-422, 460-466, and Gln-507; that span reads CSAGIGR. Cys-460 (phosphocysteine intermediate) is an active-site residue. A disordered region spans residues 599 to 666; it reads AAKLQPPLPP…NANGNGNILG (68 aa). Residues 612 to 666 are compositionally biased toward low complexity; sequence SNNNNSSGNSGSYCNSSSSTSTAQHNGVVSSSNNCSSGSGSANSSNANGNGNILG.

Belongs to the protein-tyrosine phosphatase family. Non-receptor class subfamily.

The protein resides in the cytoplasm. It catalyses the reaction O-phospho-L-tyrosyl-[protein] + H2O = L-tyrosyl-[protein] + phosphate. Required in all receptor tyrosine kinase signaling pathways. Functions downstream of the receptor tyrosine kinase torso, acting in concert with D-Raf via tailless. Also functions downstream of Egfr (epidermal growth factor receptor) and btl (fibroblast growth factor receptor). The SH2 domain suggests that csw effects its role by mediating heteromeric protein interactions. Maternally required for normal determination of cell fates at the termini of the embryo. Required for cell fate specification of the ventral ectoderm, in the developing embryonic CNS and for embryonic tracheal cell migration. Functions during imaginal development for proper formation of adult structures such as eyes, aristae, L5 wing vein and the tarsal claw. The protein is Tyrosine-protein phosphatase corkscrew (csw) of Drosophila virilis (Fruit fly).